Here is a 228-residue protein sequence, read N- to C-terminus: Uridylate kinase (228 aa).

Residue 9–10 (GS) coordinates ATP. Glycine 44 serves as a coordination point for UMP. Glycine 45 and arginine 49 together coordinate ATP. UMP is bound by residues aspartate 66 and 114–120 (IVAAQTT). ATP contacts are provided by threonine 140, tyrosine 146, and aspartate 149.

The protein belongs to the UMP kinase family. As to quaternary structure, homohexamer.

The protein resides in the cytoplasm. The catalysed reaction is UMP + ATP = UDP + ADP. It participates in pyrimidine metabolism; CTP biosynthesis via de novo pathway; UDP from UMP (UMPK route): step 1/1. Its activity is regulated as follows. Inhibited by UTP. Functionally, catalyzes the reversible phosphorylation of UMP to UDP. This is Uridylate kinase from Haloarcula marismortui (strain ATCC 43049 / DSM 3752 / JCM 8966 / VKM B-1809) (Halobacterium marismortui).